We begin with the raw amino-acid sequence, 376 residues long: Chaperone protein DnaJ (376 aa).

The J domain maps to 5-69 (DYYEVLGISK…QKRAQYDQYG (65 aa)). A CR-type zinc finger spans residues 133–215 (GKDAEIEIPR…CHGKGRVTKT (83 aa)). Positions 146, 149, 163, 166, 189, 192, 203, and 206 each coordinate Zn(2+). CXXCXGXG motif repeat units follow at residues 146–153 (CDTCHGSG), 163–170 (CSHCGGKG), 189–196 (CQYCNGTG), and 203–210 (CPTCHGKG).

This sequence belongs to the DnaJ family. Homodimer. It depends on Zn(2+) as a cofactor.

Its subcellular location is the cytoplasm. Functionally, participates actively in the response to hyperosmotic and heat shock by preventing the aggregation of stress-denatured proteins and by disaggregating proteins, also in an autonomous, DnaK-independent fashion. Unfolded proteins bind initially to DnaJ; upon interaction with the DnaJ-bound protein, DnaK hydrolyzes its bound ATP, resulting in the formation of a stable complex. GrpE releases ADP from DnaK; ATP binding to DnaK triggers the release of the substrate protein, thus completing the reaction cycle. Several rounds of ATP-dependent interactions between DnaJ, DnaK and GrpE are required for fully efficient folding. Also involved, together with DnaK and GrpE, in the DNA replication of plasmids through activation of initiation proteins. This is Chaperone protein DnaJ from Listeria monocytogenes serotype 4a (strain HCC23).